The primary structure comprises 187 residues: MPAAPKQRKIAIVGSRSVGKSSLTVRFVEHHFVESYYPTIENTFSRIIKYNGQDFATEIVDTAGQDEYSILNSKHFIGIHGYIIVYSVASRQSFDMVRVIRDKILNHLGADHVPLVVVGNKSDLKSEQRQVSLDEGRQLGEEFQCAFTEASARLDYNVTKAFDLMIGEIEKSQNPSQPAGGSKCILM.

Residues S17, V18, G19, K20, S21, S22, V33, and E34 each contribute to the GDP site. Residue S17 coordinates GTP. Positions 19, 20, 21, 22, and 33 each coordinate GTP. S21 is a binding site for Mg(2+). Y36, T39, N120, D123, and A152 together coordinate GTP. An Effector region motif is present at residues 36-44 (YYPTIENTF). T39 serves as a coordination point for Mg(2+). 3 residues coordinate GDP: N120, D123, and A152. C184 carries the S-farnesyl cysteine lipid modification.

This sequence belongs to the small GTPase superfamily. Rheb family. Farnesylation is important for efficiently activating mTORC1-mediated signaling.

Its subcellular location is the cell membrane. The catalysed reaction is GTP + H2O = GDP + phosphate + H(+). With respect to regulation, alternates between an inactive form bound to GDP and an active form bound to GTP. Functionally, small GTPase that acts as an allosteric activator of the canonical TOR pathway, an evolutionarily conserved central nutrient sensor that stimulates anabolic reactions and macromolecule biosynthesis to promote cellular biomass generation and growth. Plays a role in virulence. The sequence is that of Small monomeric GTPase RhbA from Aspergillus fumigatus (strain ATCC MYA-4609 / CBS 101355 / FGSC A1100 / Af293) (Neosartorya fumigata).